Here is a 301-residue protein sequence, read N- to C-terminus: Acetylglutamate kinase (301 aa).

Substrate contacts are provided by residues 68 to 69 (GG), R90, and N197.

The protein belongs to the acetylglutamate kinase family. ArgB subfamily.

It is found in the cytoplasm. The enzyme catalyses N-acetyl-L-glutamate + ATP = N-acetyl-L-glutamyl 5-phosphate + ADP. It participates in amino-acid biosynthesis; L-arginine biosynthesis; N(2)-acetyl-L-ornithine from L-glutamate: step 2/4. Its function is as follows. Catalyzes the ATP-dependent phosphorylation of N-acetyl-L-glutamate. The polypeptide is Acetylglutamate kinase (Nitrosococcus oceani (strain ATCC 19707 / BCRC 17464 / JCM 30415 / NCIMB 11848 / C-107)).